Consider the following 302-residue polypeptide: Stanniocalcin-2 (302 aa).

Residues 1 to 24 (MCAERLGQFMTLALVLATFDPARG) form the signal peptide. The segment at 23–44 (RGTDATNPPEGPQDRSPQQKGR) is disordered. N-linked (GlcNAc...) asparagine glycans are attached at residues Asn73 and Asn74. The segment at 217–302 (RPPTAPPERQ…EQSEYSDIRR (86 aa)) is disordered. Residues 227 to 264 (PQVDRTKLSRAHHGEAGHHLPEPSSRETGRGAKGERGS) are compositionally biased toward basic and acidic residues. Phosphoserine occurs at positions 250 and 251. The residue at position 254 (Thr254) is a Phosphothreonine.

It belongs to the stanniocalcin family. In terms of assembly, homodimer; disulfide-linked.

It is found in the secreted. In terms of biological role, has an anti-hypocalcemic action on calcium and phosphate homeostasis. This is Stanniocalcin-2 (STC2) from Pongo abelii (Sumatran orangutan).